Reading from the N-terminus, the 685-residue chain is E3 ubiquitin-protein ligase RNF103 (685 aa).

The next 4 helical transmembrane spans lie at 6–26 (FFLL…EAIV), 326–346 (LFVL…FITQ), 366–386 (LLII…LDSF), and 411–431 (MFYS…GLLI). Acidic residues predominate over residues 526–543 (EEMSEGSQDTENDSESEN). Residues 526–550 (EEMSEGSQDTENDSESENTDTLSSE) are disordered. An RING-type zinc finger spans residues 621 to 663 (CVVCLENFENGCLLMGLPCGHVFHQNCIVMWLAGGRHCCPVCR).

Interacts with DERL1 and VCP. Highly expressed in the normal cerebellum but not in the cerebral cortex.

It localises to the endoplasmic reticulum membrane. The catalysed reaction is S-ubiquitinyl-[E2 ubiquitin-conjugating enzyme]-L-cysteine + [acceptor protein]-L-lysine = [E2 ubiquitin-conjugating enzyme]-L-cysteine + N(6)-ubiquitinyl-[acceptor protein]-L-lysine.. The protein operates within protein modification; protein ubiquitination. In terms of biological role, acts as an E2-dependent E3 ubiquitin-protein ligase, probably involved in the ER-associated protein degradation pathway. This is E3 ubiquitin-protein ligase RNF103 (RNF103) from Homo sapiens (Human).